Consider the following 565-residue polypeptide: Oxygen-dependent choline dehydrogenase (565 aa).

6-35 (DYIIVGAGSAGNTLATRLTEDAGVTVLLLE) contacts FAD. A disordered region spans residues 182-201 (QQEGFGPMDRTVTKNGRRSS). Histidine 475 functions as the Proton acceptor in the catalytic mechanism.

The protein belongs to the GMC oxidoreductase family. FAD is required as a cofactor.

It catalyses the reaction choline + A = betaine aldehyde + AH2. It carries out the reaction betaine aldehyde + NAD(+) + H2O = glycine betaine + NADH + 2 H(+). Its pathway is amine and polyamine biosynthesis; betaine biosynthesis via choline pathway; betaine aldehyde from choline (cytochrome c reductase route): step 1/1. Its function is as follows. Involved in the biosynthesis of the osmoprotectant glycine betaine. Catalyzes the oxidation of choline to betaine aldehyde and betaine aldehyde to glycine betaine at the same rate. This is Oxygen-dependent choline dehydrogenase from Pseudomonas putida (strain ATCC 47054 / DSM 6125 / CFBP 8728 / NCIMB 11950 / KT2440).